A 226-amino-acid chain; its full sequence is MSLLQFQQVGYWYKNKSQPLFQDINISFQKGKFYTIVGTSGTGKTTFLSLAGGLDAPKEGNILYDGKAVSKIGLTNFRNQYVSIVFQAYNLLPYMTALQNVTTAMEITGSKEKNKESYALDMLQKVGINEKQARQKVLTLSGGQQQRVSITRAFCCDTDLIVADEPTGNLDEDTSKEIVRLFQDLAHKEDKCVIMVTHDEQIAKVSDINIRLSRGSFTVKENVAVV.

The ABC transporter domain maps to 4-226; sequence LQFQQVGYWY…FTVKENVAVV (223 aa). 38-45 contacts ATP; sequence GTSGTGKT.

The protein belongs to the ABC transporter superfamily.

This is an uncharacterized protein from Bacillus subtilis (strain 168).